A 54-amino-acid chain; its full sequence is Large ribosomal subunit protein bL33A (54 aa).

The protein belongs to the bacterial ribosomal protein bL33 family.

The polypeptide is Large ribosomal subunit protein bL33A (Saccharopolyspora erythraea (strain ATCC 11635 / DSM 40517 / JCM 4748 / NBRC 13426 / NCIMB 8594 / NRRL 2338)).